Consider the following 516-residue polypeptide: RNA-binding region-containing protein 3 (516 aa).

4 disordered regions span residues 1–27 (MAAPEQPLPMSRGCQNSSSLSPPRGDR), 106–130 (VHSPCPSLGTEKKKRSDDPVEDDKE), 210–254 (EDYM…DEDR), and 264–283 (ANLQPKRPKPIKQRHVRKKR). Residue Ser-21 is modified to Phosphoserine. The RRM 1 domain maps to 27 to 102 (RTLLVRHLPA…HTLVVEFAKE (76 aa)). Ser-108 bears the Phosphoserine mark. Residues 115–130 (TEKKKRSDDPVEDDKE) are compositionally biased toward basic and acidic residues. Positions 217–230 (APLPPTSPQPPEEP) are enriched in pro residues. A compositionally biased stretch (basic residues) spans 269–283 (KRPKPIKQRHVRKKR). The 84-residue stretch at 419–502 (CRIYVKNLAK…KPMVVQFARS (84 aa)) folds into the RRM 2 domain.

Component of the U11/U12 snRNPs that are part of the U12-type spliceosome. Found in a complex with m(7)G-capped U12 snRNA. Interacts with PDCD7.

The protein localises to the nucleus. Functionally, participates in pre-mRNA U12-dependent splicing, performed by the minor spliceosome which removes U12-type introns. U12-type introns comprises less than 1% of all non-coding sequences. Binds to the 3'-stem-loop of m(7)G-capped U12 snRNA. The protein is RNA-binding region-containing protein 3 (RNPC3) of Bos taurus (Bovine).